Reading from the N-terminus, the 439-residue chain is Histidinol dehydrogenase (439 aa).

Residues Y132, Q194, and N217 each coordinate NAD(+). Substrate contacts are provided by S244, Q266, and H269. Zn(2+) contacts are provided by Q266 and H269. Catalysis depends on proton acceptor residues E335 and H336. 4 residues coordinate substrate: H336, D369, E423, and H428. Zn(2+) is bound at residue D369. H428 is a Zn(2+) binding site.

The protein belongs to the histidinol dehydrogenase family. The cofactor is Zn(2+).

It catalyses the reaction L-histidinol + 2 NAD(+) + H2O = L-histidine + 2 NADH + 3 H(+). It functions in the pathway amino-acid biosynthesis; L-histidine biosynthesis; L-histidine from 5-phospho-alpha-D-ribose 1-diphosphate: step 9/9. Its function is as follows. Catalyzes the sequential NAD-dependent oxidations of L-histidinol to L-histidinaldehyde and then to L-histidine. The protein is Histidinol dehydrogenase (his2) of Schizosaccharomyces pombe (strain 972 / ATCC 24843) (Fission yeast).